The sequence spans 955 residues: Vacuolar membrane protease (955 aa).

At 1-16 (MASLRLPRANPLAFTR) the chain is on the cytoplasmic side. A helical transmembrane segment spans residues 17–37 (WPVTVITAIVYLALLIPLLVV). Topologically, residues 38–390 (HHVVPSAPSS…STFVLFQLHT (353 aa)) are vacuolar. 2 N-linked (GlcNAc...) asparagine glycosylation sites follow: asparagine 53 and asparagine 119. Residues histidine 174 and aspartate 186 each coordinate Zn(2+). Glutamate 220 serves as the catalytic Proton acceptor. The Zn(2+) site is built by glutamate 221, glutamate 246, and histidine 319. Residues 391 to 411 (LFALLVTLLIVGPLTLLFTSI) form a helical membrane-spanning segment. The Cytoplasmic segment spans residues 412–442 (ALTKADKMYLFRSSAKSEDRLDVVPLQGLRG). The chain crosses the membrane as a helical span at residues 443-463 (FFRFPFLFGIPTVVTVGLAYL). Topologically, residues 464–473 (VTKVNPYIIH) are vacuolar. A helical transmembrane segment spans residues 474 to 494 (SSAYAVWSMMVAAWVFLAWFV). Residues 495-508 (SRVADFARPSAFHR) are Cytoplasmic-facing. Residues 509-529 (IYTLTWMYVLSWVSAVIATVY) form a helical membrane-spanning segment. At 530–533 (ANQR) the chain is on the vacuolar side. A helical membrane pass occupies residues 534-554 (GLAGGYFIFFFHAGIFLAKWI). The Cytoplasmic portion of the chain corresponds to 555 to 656 (SYLELFALPS…WSYALPKWTW (102 aa)). Residues 574–590 (SASGRASGHGSRRGTTS) show a composition bias toward low complexity. The tract at residues 574-611 (SASGRASGHGSRRGTTSGEDDGEEAEEEPTESTSLLGS) is disordered. Acidic residues predominate over residues 591–603 (GEDDGEEAEEEPT). A helical membrane pass occupies residues 657–677 (VLQLLLTAPITLIMVGPLALL). The Vacuolar segment spans residues 678-693 (TISAISQTGQDGGHPL). The chain crosses the membrane as a helical span at residues 694–714 (FAYVAIAIFTTIMLTPLLPFI). The Cytoplasmic segment spans residues 715 to 721 (HRYTYHV). Residues 722–742 (PLFLLAVFLGTLIYNLVAFPF) form a helical membrane-spanning segment. Over 743–955 (SDSNRLKLYY…RRAFEIGNDD (213 aa)) the chain is Vacuolar. N-linked (GlcNAc...) asparagine glycosylation occurs at asparagine 826.

It belongs to the peptidase M28 family. Requires Zn(2+) as cofactor.

The protein resides in the vacuole membrane. In terms of biological role, may be involved in vacuolar sorting and osmoregulation. The polypeptide is Vacuolar membrane protease (Aspergillus oryzae (strain ATCC 42149 / RIB 40) (Yellow koji mold)).